Here is a 153-residue protein sequence, read N- to C-terminus: UPF0756 membrane protein lwe1581 (153 aa).

A run of 4 helical transmembrane segments spans residues 6-26 (MLFL…SLII), 54-74 (WGVT…QIGF), 80-100 (SFKS…SILA), and 117-137 (LVFG…GPVI).

Belongs to the UPF0756 family.

It localises to the cell membrane. The protein is UPF0756 membrane protein lwe1581 of Listeria welshimeri serovar 6b (strain ATCC 35897 / DSM 20650 / CCUG 15529 / CIP 8149 / NCTC 11857 / SLCC 5334 / V8).